The primary structure comprises 443 residues: F-box only protein 39 (443 aa).

An F-box domain is found at 13–59 (QSCWATLPDVCLRRVFWWLGDRDRSRAALVCRKWNQIMYSADLWRYR).

In terms of assembly, directly interacts with SKP1 and CUL1.

Its function is as follows. Substrate-recognition component of the SCF (SKP1-CUL1-F-box protein)-type E3 ubiquitin ligase complex. This chain is F-box only protein 39 (Fbxo39), found in Mus musculus (Mouse).